The primary structure comprises 117 residues: Minor capsid protein p17 (117 aa).

A glycan (N-linked (GlcNAc...) asparagine; by host) is linked at N12. Residues 39–59 form a helical membrane-spanning segment; sequence AILLGILILLVIILIIVAIVY. The tract at residues 96–117 is disordered; the sequence is KNSTSQQSHIPSDEQLAELAHS. The N-linked (GlcNAc...) asparagine; by host glycan is linked to N97.

The protein belongs to the asfivirus minor capsid protein p17 family. As to quaternary structure, interacts with the minor capsid protein M1249L and with the hexon capsid protein p72 capsomers; these interactions form a rigid zipper structure that stabilizes the capsomers. Interacts with host STING1.

Its subcellular location is the virion membrane. The protein resides in the host endoplasmic reticulum membrane. Functionally, together with the penton and the other minor capsid proteins (M1249L, p49), forms a complicated network immediately below the outer capsid shell, stabilizing the whole capsid. Three copies of p17 encircle each p72 capsomer in the inner capsid shell, anchoring p72 capsomers on the inner membrane. Required for the assembly of the capsid and icosahedral morphogenesis. Additionally, inhibits the host cGAS-STING pathway through its interaction with STING1 and subsequent interference of the recruitment of downstream components TBK1 and IKBKE. This African swine fever virus (isolate Warthog/Namibia/Wart80/1980) (ASFV) protein is Minor capsid protein p17.